A 44-amino-acid polypeptide reads, in one-letter code: Defensin-like protein 1 (44 aa).

Glutamine 1 is modified (pyrrolidone carboxylic acid). Cysteine 15 and cysteine 36 form a disulfide bridge.

This sequence belongs to the DEFL family. In terms of assembly, forms oligomers in its native state.

The protein resides in the secreted. Its function is as follows. Possesses antifungal activity sensitive to inorganic cations. This Brassica napus (Rape) protein is Defensin-like protein 1 (AFP1).